The chain runs to 497 residues: Sestrin homolog (497 aa).

Serine 185 and serine 190 each carry phosphoserine. A compositionally biased stretch (polar residues) spans 226 to 241 (NANPDYDSQTAASSNG). The tract at residues 226-255 (NANPDYDSQTAASSNGGAPPDSANAVADGP) is disordered.

The protein belongs to the sestrin family. Associates with the GATOR2 complex; the interaction is probably direct. Associates with the GATOR1 complex; the interaction is probably indirect and mediated by the GATOR2 complex. In terms of tissue distribution, highly expressed in muscle-enriched tissues (at protein level).

It is found in the nucleus. The protein resides in the cytoplasm. Functionally, functions as a negative feedback regulator of mTOR function. The polypeptide is Sestrin homolog (Drosophila melanogaster (Fruit fly)).